The primary structure comprises 310 residues: Ribosomal RNA small subunit methyltransferase H (310 aa).

S-adenosyl-L-methionine contacts are provided by residues 32-34 (AGH), aspartate 51, phenylalanine 78, aspartate 99, and glutamine 106. A disordered region spans residues 290-310 (GELEDNRRSRSAKLRVAEKQK).

This sequence belongs to the methyltransferase superfamily. RsmH family.

It localises to the cytoplasm. The catalysed reaction is cytidine(1402) in 16S rRNA + S-adenosyl-L-methionine = N(4)-methylcytidine(1402) in 16S rRNA + S-adenosyl-L-homocysteine + H(+). Functionally, specifically methylates the N4 position of cytidine in position 1402 (C1402) of 16S rRNA. The sequence is that of Ribosomal RNA small subunit methyltransferase H from Exiguobacterium sp. (strain ATCC BAA-1283 / AT1b).